Reading from the N-terminus, the 451-residue chain is Glutamyl-tRNA reductase (451 aa).

Substrate-binding positions include 47–50 (TCNR), S132, 137–139 (EPQ), and Q143. C48 acts as the Nucleophile in catalysis. 212-217 (AAGEMN) is a binding site for NADP(+).

It belongs to the glutamyl-tRNA reductase family. As to quaternary structure, homodimer.

The catalysed reaction is (S)-4-amino-5-oxopentanoate + tRNA(Glu) + NADP(+) = L-glutamyl-tRNA(Glu) + NADPH + H(+). It participates in porphyrin-containing compound metabolism; protoporphyrin-IX biosynthesis; 5-aminolevulinate from L-glutamyl-tRNA(Glu): step 1/2. Catalyzes the NADPH-dependent reduction of glutamyl-tRNA(Glu) to glutamate 1-semialdehyde (GSA). The chain is Glutamyl-tRNA reductase from Psychrobacter sp. (strain PRwf-1).